The chain runs to 394 residues: Nuclear pore glycoprotein p62 (394 aa).

5 repeat units span residues 22 to 23 (FG), 50 to 51 (FG), 75 to 76 (FG), 77 to 78 (FG), and 116 to 117 (FG). A 5 X 2 AA repeats of F-G region spans residues 22–117 (FGLSTGTPAA…GTSAAPPAFG (96 aa)). Residues 45-57 (KTTFSFGTPAPTA) show a composition bias toward low complexity. The disordered stretch occupies residues 45–73 (KTTFSFGTPAPTAGIGGGDADNSKAQAPP). The stretch at 211-341 (SYHQLEEHIN…DNLNEANKGQ (131 aa)) forms a coiled coil.

Belongs to the nucleoporin NSP1/NUP62 family. As to expression, expressed in adult male accessory glands (at protein level).

The protein resides in the nucleus. It is found in the chromosome. Its subcellular location is the nucleus envelope. It localises to the nuclear pore complex. The protein localises to the cytoplasm. The protein resides in the cytoskeleton. It is found in the spindle pole. Its subcellular location is the microtubule organizing center. It localises to the centrosome. Its function is as follows. Essential component of the nuclear pore complex. The N-terminal is probably involved in nucleocytoplasmic transport. The C-terminal is involved in protein-protein interaction probably via coiled-coil formation, promotes its association with centrosomes and may function in anchorage of Nup62 to the pore complex. Binds to transcriptionally active genes. Negatively regulates chromatin attachment to the nuclear envelope, probably by preventing chromatin tethering by Nup154. This is Nuclear pore glycoprotein p62 from Drosophila melanogaster (Fruit fly).